A 186-amino-acid polypeptide reads, in one-letter code: Transcriptional repressor NrdR (186 aa).

A zinc finger spans residues 3-34 (CPFCRHPDSRVVDSREAEEGAAIRRRRSCPAC). One can recognise an ATP-cone domain in the interval 46–136 (LRVRKRSGAT…VYLAFESLGD (91 aa)). The tract at residues 149-169 (AGGGEPPVAGKPTTMPAATGA) is disordered.

This sequence belongs to the NrdR family. The cofactor is Zn(2+).

Negatively regulates transcription of bacterial ribonucleotide reductase nrd genes and operons by binding to NrdR-boxes. The protein is Transcriptional repressor NrdR of Parafrankia sp. (strain EAN1pec).